Reading from the N-terminus, the 527-residue chain is (3S)-3-amino-3-(3-chloro-4-hydroxyphenyl)propanoyl-[peptidyl-carrier protein SgcC2] monooxygenase (527 aa).

Residues 1-10 (MPHGAEREAS) show a composition bias toward basic and acidic residues. The tract at residues 1 to 22 (MPHGAEREASPAEESAGTRPLT) is disordered. Residues 161–163 (HAF), 167–170 (PVDR), and Thr-202 contribute to the FAD site.

This sequence belongs to the FADH(2)-utilizing monooxygenase family. As to quaternary structure, homotetramer.

The enzyme catalyses (3S)-3-amino-3-(3-chloro-4-hydroxyphenyl)propanoyl-[SgcC2 peptidyl-carrier protein] + FADH2 + O2 = (3S)-3-amino-3-(3-chloro-4,5-dihydroxyphenyl)propanoyl-[SgcC2 peptidyl-carrier protein] + FAD + H2O + H(+). The protein operates within antibiotic biosynthesis. With respect to regulation, the SgcE6-SgcC hydroxylation activity decreases in the presence of excess FAD. Oxygenase component of a two-component system involved in the biosynthesis of the enediyne antitumor antibiotic C-1027. Uses FADH(2) supplied by SgcE6 to catalyze the C-5 hydroxylation of (S)-3-chloro-beta-tyrosyl-S-SgcC2. Can also efficiently catalyze the regioselective hydroxylation of other 3-substituted beta-tyrosyl-S-SgcC2 analogs, including the bromo-, iodo-, fluoro-, and methyl-substituted analogs, but does not accept 3-hydroxy-beta-tyrosyl-S-SgcC2 as a substrate. Is only active with SgcC2 (peptidyl carrier protein)-tethered substrates. This is (3S)-3-amino-3-(3-chloro-4-hydroxyphenyl)propanoyl-[peptidyl-carrier protein SgcC2] monooxygenase from Streptomyces globisporus.